The sequence spans 372 residues: 4-hydroxy-3-methylbut-2-en-1-yl diphosphate synthase (flavodoxin) (372 aa).

The [4Fe-4S] cluster site is built by Cys-270, Cys-273, Cys-305, and Glu-312.

It belongs to the IspG family. The cofactor is [4Fe-4S] cluster.

It catalyses the reaction (2E)-4-hydroxy-3-methylbut-2-enyl diphosphate + oxidized [flavodoxin] + H2O + 2 H(+) = 2-C-methyl-D-erythritol 2,4-cyclic diphosphate + reduced [flavodoxin]. It participates in isoprenoid biosynthesis; isopentenyl diphosphate biosynthesis via DXP pathway; isopentenyl diphosphate from 1-deoxy-D-xylulose 5-phosphate: step 5/6. Converts 2C-methyl-D-erythritol 2,4-cyclodiphosphate (ME-2,4cPP) into 1-hydroxy-2-methyl-2-(E)-butenyl 4-diphosphate. The protein is 4-hydroxy-3-methylbut-2-en-1-yl diphosphate synthase (flavodoxin) of Marinobacter nauticus (strain ATCC 700491 / DSM 11845 / VT8) (Marinobacter aquaeolei).